Here is a 472-residue protein sequence, read N- to C-terminus: Mitochondrial substrate carrier family protein C (472 aa).

The Mitochondrial intermembrane segment spans residues 1–189 (MVLNENDKEF…ASSLRNTITY (189 aa)). EF-hand domains lie at 6-41 (NDKE…LRIP), 42-70 (SSEK…FEDF), 73-108 (ENIK…LNIP), and 110-145 (YSEQ…LPNS). Residues D19, D21, N23, K25, E30, D55, D57, D59, S61, E66, D86, N88, S90, T92, E97, D123, N125, D127, Q129, and E134 each coordinate Ca(2+). Solcar repeat units lie at residues 184-268 (RNTI…VKKL), 276-362 (LTSA…LKHK), and 375-461 (GQLL…FKKA). Residues 190–207 (MLAGSVAGFASRTSTAPL) traverse the membrane as a helical segment. The Mitochondrial matrix segment spans residues 208 to 242 (ERVKIMCQLNHGKPISLISAFKACYKDGGIKGFFR). The chain crosses the membrane as a helical span at residues 243–263 (GNLANIIKVSPESAVKFGTYE). At 264 to 281 (YVKKLFAENDCELTSAQR) the chain is on the mitochondrial intermembrane side. Residues 282-302 (FISGSVAGVVSHTTLFPLEVV) form a helical membrane-spanning segment. The Mitochondrial matrix portion of the chain corresponds to 303–330 (RLRLSAEIAGTYNGIFDCFKKIAISEKS). The helical transmembrane segment at 331-351 (IRPFYRGLGASITATIPHSGV) threads the bilayer. The Mitochondrial intermembrane portion of the chain corresponds to 352-377 (NMMVYEFLKHKVIKMTGNEFPTAGQL). Residues 378 to 398 (LVCASTSSVCGQLVGYPFHVV) form a helical membrane-spanning segment. Residues 399-441 (KSRLITQGSSVNQEKYTGLFDGLTKIIKKEGPIGLYKGIVPSF) lie on the Mitochondrial matrix side of the membrane. The helical transmembrane segment at 442 to 462 (MKSIPSHSITFIVYEGFKKAF) threads the bilayer. The Mitochondrial intermembrane segment spans residues 463–472 (DVNLKEKKHH).

Belongs to the mitochondrial carrier (TC 2.A.29) family.

The protein resides in the mitochondrion inner membrane. Calcium-dependent mitochondrial solute carrier. Mitochondrial solute carriers shuttle metabolites, nucleotides, and cofactors through the mitochondrial inner membrane. In Dictyostelium discoideum (Social amoeba), this protein is Mitochondrial substrate carrier family protein C (mcfC).